A 663-amino-acid polypeptide reads, in one-letter code: Inner nuclear membrane protein HEH2 (663 aa).

2 disordered regions span residues 46 to 188 and 267 to 289; these read QRLQ…ELPN and ISET…KNIR. Residues 47 to 62 are compositionally biased toward polar residues; that stretch reads RLQSSPEASKVRTSIQ. The segment covering 91–123 has biased composition (basic and acidic residues); that stretch reads KTVKDENVETNKRKREQISTDNEAKMQIQEEKS. Position 123 is a phosphoserine (Ser123). Residues 124-134 show a composition bias toward basic residues; the sequence is PKKKRKKRSSK. The short motif at 124 to 137 is the Nuclear localization signal element; that stretch reads PKKKRKKRSSKANK. The span at 164-183 shows a compositional bias: basic and acidic residues; that stretch reads EELHKKDSSDDKPRVKELPK. The helical transmembrane segment at 317-337 threads the bilayer; that stretch reads LFIWLWNGAIFLSIICPILFG.

As to quaternary structure, interacts with SRP1.

The protein localises to the nucleus inner membrane. In Saccharomyces cerevisiae (strain ATCC 204508 / S288c) (Baker's yeast), this protein is Inner nuclear membrane protein HEH2 (HEH2).